A 339-amino-acid polypeptide reads, in one-letter code: MLLRPRRLPAFSPPSPASPDAELRSAGDVPVTTSDAFATSGGMAEPGSPKAPVSPDSAQRTPWSARETELLLGTLLQPAMWRSLLLDRRQTLPTYRRVSAALARQQVRRTPAQCRRRYKFLKDKLRDSQGQPSGPFDNQIRQLMGLLGDDGPPRVRRRSTGPGRPQRRGRSSLSALAPAPAPVEQEAELPLAAENDEPAPALRFSSSTTKSAGAHRITSSPPLTSTDTLPPEPGHTFESSPTPTPDHDVETPNEPPGLSQGRASSPQVAPQSLNTALLQTLTHLGDISTVLGPLRDQLSTLNQHVEHLRGSFDQTVSLAVGFILGSAASERGILGDLRQ.

Disordered stretches follow at residues 1–62 (MLLR…QRTP) and 144–270 (MGLL…QVAP). Residues Ser-15, Ser-18, Ser-48, and Ser-54 each carry the phosphoserine modification. The segment covering 154-170 (RVRRRSTGPGRPQRRGR) has biased composition (basic residues). 2 stretches are compositionally biased toward low complexity: residues 171–193 (SSLSALAPAPAPVEQEAELPLAA) and 218–229 (TSSPPLTSTDTL). Residues 261–270 (GRASSPQVAP) show a composition bias toward polar residues. The leucine-zipper stretch occupies residues 279–310 (QTLTHLGDISTVLGPLRDQLSTLNQHVEHLRG).

As to quaternary structure, binds to the N-terminal region of ATF2. Associates with the TFIID complex through interaction with TBP. Post-translationally, phosphorylated. Expressed mainly in pluripotent cells with expression rapidly down-regulated upon cell differentiation.

The protein localises to the nucleus. Its function is as follows. Acts as a transcriptional coactivator of ATF2. In Mus musculus (Mouse), this protein is Undifferentiated embryonic cell transcription factor 1.